We begin with the raw amino-acid sequence, 309 residues long: Chronophin (309 aa).

The Nucleophile role is filled by D25. 2 residues coordinate Mg(2+): D25 and D27. The active-site Proton donor is D27. Substrate-binding positions include 58–60 (SNN), H178, and K209. Residue D234 coordinates Mg(2+).

This sequence belongs to the HAD-like hydrolase superfamily. In terms of assembly, homodimer. It depends on Mg(2+) as a cofactor.

The protein localises to the cytoplasm. It localises to the cytosol. The protein resides in the cytoskeleton. It is found in the cell projection. Its subcellular location is the ruffle membrane. The protein localises to the lamellipodium membrane. It localises to the cell membrane. The enzyme catalyses pyridoxal 5'-phosphate + H2O = pyridoxal + phosphate. It catalyses the reaction pyridoxine 5'-phosphate + H2O = pyridoxine + phosphate. It carries out the reaction pyridoxamine + phosphate = pyridoxamine 5'-phosphate + H2O. The catalysed reaction is O-phospho-L-seryl-[protein] + H2O = L-seryl-[protein] + phosphate. Functionally, functions as a pyridoxal phosphate (PLP) phosphatase, which also catalyzes the dephosphorylation of pyridoxine 5'-phosphate (PNP) and pyridoxamine 5'-phosphate (PMP), with order of substrate preference PLP &gt; PNP &gt; PMP and therefore plays a role in vitamin B6 metabolism. Also functions as a protein serine phosphatase that specifically dephosphorylates 'Ser-3' in proteins of the actin-depolymerizing factor (ADF)/cofilin family like CFL1 and DSTN. Thereby, regulates cofilin-dependent actin cytoskeleton reorganization, being required for normal progress through mitosis and normal cytokinesis. Does not dephosphorylate phosphothreonines in LIMK1. Does not dephosphorylate peptides containing phosphotyrosine. The protein is Chronophin of Rattus norvegicus (Rat).